The following is a 340-amino-acid chain: Ketol-acid reductoisomerase (NADP(+)) (340 aa).

Residues 1-182 (MRVYYDRDCD…GGGRSGIIET (182 aa)) enclose the KARI N-terminal Rossmann domain. Residues 24-27 (YGSQ), arginine 48, serine 51, serine 53, and 83-86 (DELQ) each bind NADP(+). Histidine 108 is a catalytic residue. An NADP(+)-binding site is contributed by glycine 134. Residues 183–329 (NFREECETDL…KELRGMMPWI (147 aa)) enclose the KARI C-terminal knotted domain. Aspartate 191, glutamate 195, glutamate 227, and glutamate 231 together coordinate Mg(2+). Residue serine 252 participates in substrate binding.

The protein belongs to the ketol-acid reductoisomerase family. It depends on Mg(2+) as a cofactor.

The catalysed reaction is (2R)-2,3-dihydroxy-3-methylbutanoate + NADP(+) = (2S)-2-acetolactate + NADPH + H(+). It carries out the reaction (2R,3R)-2,3-dihydroxy-3-methylpentanoate + NADP(+) = (S)-2-ethyl-2-hydroxy-3-oxobutanoate + NADPH + H(+). It participates in amino-acid biosynthesis; L-isoleucine biosynthesis; L-isoleucine from 2-oxobutanoate: step 2/4. It functions in the pathway amino-acid biosynthesis; L-valine biosynthesis; L-valine from pyruvate: step 2/4. Its function is as follows. Involved in the biosynthesis of branched-chain amino acids (BCAA). Catalyzes an alkyl-migration followed by a ketol-acid reduction of (S)-2-acetolactate (S2AL) to yield (R)-2,3-dihydroxy-isovalerate. In the isomerase reaction, S2AL is rearranged via a Mg-dependent methyl migration to produce 3-hydroxy-3-methyl-2-ketobutyrate (HMKB). In the reductase reaction, this 2-ketoacid undergoes a metal-dependent reduction by NADPH to yield (R)-2,3-dihydroxy-isovalerate. This chain is Ketol-acid reductoisomerase (NADP(+)), found in Dinoroseobacter shibae (strain DSM 16493 / NCIMB 14021 / DFL 12).